Reading from the N-terminus, the 210-residue chain is MTTLETLKWDGKKSGKVSLDLAVAKKTSSADLIHRAVLRQLANKRQGTASTLTRSEVRGGGRKPYKQKGTGRARQGSIRTPLRPGGGIIFGPKPRSYNLDMNRKERRLALRTALMSRVSDIKAVEDFGSTLKQPKTSDIINGLARLGIQKTEKVLVILDSPSDIIKKSINNIEKVKLIAADQLNVFDILNANKLVIGQSAIDKIQEVYAS.

The segment covering 44–54 (KRQGTASTLTR) has biased composition (polar residues). The segment at 44–85 (KRQGTASTLTRSEVRGGGRKPYKQKGTGRARQGSIRTPLRPG) is disordered. Positions 60 to 71 (GGRKPYKQKGTG) are enriched in basic residues.

The protein belongs to the universal ribosomal protein uL4 family. As to quaternary structure, part of the 50S ribosomal subunit.

In terms of biological role, one of the primary rRNA binding proteins, this protein initially binds near the 5'-end of the 23S rRNA. It is important during the early stages of 50S assembly. It makes multiple contacts with different domains of the 23S rRNA in the assembled 50S subunit and ribosome. Functionally, forms part of the polypeptide exit tunnel. This Prochlorococcus marinus (strain MIT 9301) protein is Large ribosomal subunit protein uL4.